The following is a 121-amino-acid chain: Neuromedin-B (121 aa).

Positions 1–24 (MTRQAGSSWLLRGLLLFALFASGV) are cleaved as a signal peptide. A Methionine amide modification is found at methionine 56. Residues 60–121 (SLEPPSLSLV…RRLLEPLLQK (62 aa)) constitute a propeptide that is removed on maturation.

It belongs to the bombesin/neuromedin-B/ranatensin family. In terms of tissue distribution, in the hindbrain, expressed in the medulla surrounding the lateral half of the facial nucleus. Also expressed in the olfactory bulb and hippocampus. Detected in a subset of neurons distributed throughout the retrotrapezoid nucleus/parafacial respiratory group (RTN/pFRG). Within the RTN/pFRG, expressed in neuronal subpopulations distinct from those expressing Grp. Expressed in lung.

It localises to the secreted. It is found in the cell projection. The protein localises to the neuron projection. Its function is as follows. Stimulates smooth muscle contraction. Induces sighing by acting directly on the pre-Botzinger complex, a cluster of several thousand neurons in the ventrolateral medulla responsible for inspiration during respiratory activity. Contributes to the induction of sneezing following exposure to chemical irritants or allergens which causes release of NMB by nasal sensory neurons and activation of NMBR-expressing neurons in the sneeze-evoking region of the brainstem. These in turn activate neurons of the caudal ventral respiratory group, giving rise to the sneeze reflex. Contributes to induction of acute itch, possibly through activation of the NMBR receptor on dorsal root ganglion neurons. Increases expression of NMBR and steroidogenic mediators STAR, CYP11A1 and HSD3B1 in Leydig cells, induces secretion of testosterone by Leydig cells and also promotes Leydig cell proliferation. Plays a role in the innate immune response to influenza A virus infection by enhancing interferon alpha expression and reducing expression of IL6. Plays a role in CSF1-induced proliferation of osteoclast precursors by contributing to the positive regulation of the expression of the CSF1 receptor CSF1R. This Mus musculus (Mouse) protein is Neuromedin-B (Nmb).